A 730-amino-acid chain; its full sequence is Elongation factor 2 (730 aa).

Residues 19-229 enclose the tr-type G domain; that stretch reads LMIRNIGIVA…GVSFSEVFNY (211 aa). GTP contacts are provided by residues 28 to 35, 94 to 98, and 148 to 151; these read AHIDHGKT, DTPGH, and NKVD. Position 596 is a diphthamide (histidine 596).

This sequence belongs to the TRAFAC class translation factor GTPase superfamily. Classic translation factor GTPase family. EF-G/EF-2 subfamily.

The protein resides in the cytoplasm. Catalyzes the GTP-dependent ribosomal translocation step during translation elongation. During this step, the ribosome changes from the pre-translocational (PRE) to the post-translocational (POST) state as the newly formed A-site-bound peptidyl-tRNA and P-site-bound deacylated tRNA move to the P and E sites, respectively. Catalyzes the coordinated movement of the two tRNA molecules, the mRNA and conformational changes in the ribosome. This chain is Elongation factor 2 (fusA), found in Methanococcoides burtonii (strain DSM 6242 / NBRC 107633 / OCM 468 / ACE-M).